Consider the following 214-residue polypeptide: Phosphatidylserine decarboxylase proenzyme (214 aa).

The active-site Schiff-base intermediate with substrate; via pyruvic acid is the S183. S183 carries the pyruvic acid (Ser); by autocatalysis modification.

The protein belongs to the phosphatidylserine decarboxylase family. PSD-A subfamily. In terms of assembly, heterodimer of a large membrane-associated beta subunit and a small pyruvoyl-containing alpha subunit. Requires pyruvate as cofactor. Is synthesized initially as an inactive proenzyme. Formation of the active enzyme involves a self-maturation process in which the active site pyruvoyl group is generated from an internal serine residue via an autocatalytic post-translational modification. Two non-identical subunits are generated from the proenzyme in this reaction, and the pyruvate is formed at the N-terminus of the alpha chain, which is derived from the carboxyl end of the proenzyme. The post-translation cleavage follows an unusual pathway, termed non-hydrolytic serinolysis, in which the side chain hydroxyl group of the serine supplies its oxygen atom to form the C-terminus of the beta chain, while the remainder of the serine residue undergoes an oxidative deamination to produce ammonia and the pyruvoyl prosthetic group on the alpha chain.

It localises to the cell membrane. It carries out the reaction a 1,2-diacyl-sn-glycero-3-phospho-L-serine + H(+) = a 1,2-diacyl-sn-glycero-3-phosphoethanolamine + CO2. It participates in phospholipid metabolism; phosphatidylethanolamine biosynthesis; phosphatidylethanolamine from CDP-diacylglycerol: step 2/2. Its function is as follows. Catalyzes the formation of phosphatidylethanolamine (PtdEtn) from phosphatidylserine (PtdSer). The chain is Phosphatidylserine decarboxylase proenzyme from Desulfotalea psychrophila (strain LSv54 / DSM 12343).